Reading from the N-terminus, the 332-residue chain is NADH-quinone oxidoreductase subunit H (332 aa).

A run of 8 helical transmembrane segments spans residues 11-31 (TYKI…IVWL), 77-97 (VIFI…WAVI), 110-130 (VGVL…IMGG), 156-176 (IGVI…NDII), 182-202 (LWFI…ALAE), 240-260 (NILL…LSPI), 268-288 (IPGA…FALV), and 307-327 (IFLP…FYFN).

This sequence belongs to the complex I subunit 1 family. NDH-1 is composed of 14 different subunits. Subunits NuoA, H, J, K, L, M, N constitute the membrane sector of the complex.

It is found in the cell inner membrane. The catalysed reaction is a quinone + NADH + 5 H(+)(in) = a quinol + NAD(+) + 4 H(+)(out). Its function is as follows. NDH-1 shuttles electrons from NADH, via FMN and iron-sulfur (Fe-S) centers, to quinones in the respiratory chain. The immediate electron acceptor for the enzyme in this species is believed to be ubiquinone. Couples the redox reaction to proton translocation (for every two electrons transferred, four hydrogen ions are translocated across the cytoplasmic membrane), and thus conserves the redox energy in a proton gradient. This subunit may bind ubiquinone. The polypeptide is NADH-quinone oxidoreductase subunit H (Pelagibacter ubique (strain HTCC1062)).